The primary structure comprises 277 residues: Undecaprenyl-diphosphatase (277 aa).

Transmembrane regions (helical) follow at residues 53 to 73, 85 to 105, 108 to 128, 183 to 203, 215 to 235, and 250 to 270; these read LGAI…VILG, VNLL…ADLI, WLFN…VMLW, AATE…AAYS, GDLP…MLAV, and FAWY…LGVV.

The protein belongs to the UppP family.

The protein localises to the cell inner membrane. It carries out the reaction di-trans,octa-cis-undecaprenyl diphosphate + H2O = di-trans,octa-cis-undecaprenyl phosphate + phosphate + H(+). Catalyzes the dephosphorylation of undecaprenyl diphosphate (UPP). Confers resistance to bacitracin. This is Undecaprenyl-diphosphatase from Azotobacter vinelandii (strain DJ / ATCC BAA-1303).